Consider the following 194-residue polypeptide: Crossover junction endodeoxyribonuclease RuvC (194 aa).

Active-site residues include Asp7, Glu68, and Asp141. Residues Asp7, Glu68, and Asp141 each coordinate Mg(2+). A disordered region spans residues 162 to 194; sequence GGEREQHLTAAQRQWAEAAQNSTRRRKNSDRGM. The segment covering 184–194 has biased composition (basic residues); that stretch reads TRRRKNSDRGM.

The protein belongs to the RuvC family. As to quaternary structure, homodimer which binds Holliday junction (HJ) DNA. The HJ becomes 2-fold symmetrical on binding to RuvC with unstacked arms; it has a different conformation from HJ DNA in complex with RuvA. In the full resolvosome a probable DNA-RuvA(4)-RuvB(12)-RuvC(2) complex forms which resolves the HJ. The cofactor is Mg(2+).

It localises to the cytoplasm. It carries out the reaction Endonucleolytic cleavage at a junction such as a reciprocal single-stranded crossover between two homologous DNA duplexes (Holliday junction).. Functionally, the RuvA-RuvB-RuvC complex processes Holliday junction (HJ) DNA during genetic recombination and DNA repair. Endonuclease that resolves HJ intermediates. Cleaves cruciform DNA by making single-stranded nicks across the HJ at symmetrical positions within the homologous arms, yielding a 5'-phosphate and a 3'-hydroxyl group; requires a central core of homology in the junction. The consensus cleavage sequence is 5'-(A/T)TT(C/G)-3'. Cleavage occurs on the 3'-side of the TT dinucleotide at the point of strand exchange. HJ branch migration catalyzed by RuvA-RuvB allows RuvC to scan DNA until it finds its consensus sequence, where it cleaves and resolves the cruciform DNA. In Bifidobacterium longum subsp. infantis (strain ATCC 15697 / DSM 20088 / JCM 1222 / NCTC 11817 / S12), this protein is Crossover junction endodeoxyribonuclease RuvC.